Here is a 1033-residue protein sequence, read N- to C-terminus: Tyrosine-protein kinase-like otk (1033 aa).

An N-terminal signal peptide occupies residues methionine 1 to alanine 22. Topologically, residues serine 23–alanine 581 are extracellular. 5 Ig-like C2-type domains span residues serine 25–serine 114, leucine 113–serine 199, proline 251–serine 365, proline 368–asparagine 463, and proline 468–isoleucine 558. An N-linked (GlcNAc...) asparagine glycan is attached at asparagine 39. Intrachain disulfides connect cysteine 46-cysteine 95, cysteine 137-cysteine 188, cysteine 276-cysteine 354, and cysteine 399-cysteine 447. N-linked (GlcNAc...) asparagine glycosylation is found at asparagine 336, asparagine 417, asparagine 429, asparagine 444, asparagine 457, asparagine 512, and asparagine 524. Cysteine 490 and cysteine 542 are disulfide-bonded. The chain crosses the membrane as a helical span at residues valine 582–tryptophan 602. At cysteine 603–lysine 1033 the chain is on the cytoplasmic side. 2 disordered regions span residues leucine 617–alanine 679 and serine 718–methionine 760. Polar residues predominate over residues lysine 655–arginine 673. Serine 678 carries the post-translational modification Phosphoserine. Residues leucine 692–methionine 1028 enclose the Protein kinase; inactive domain. Residues serine 720 to serine 731 are compositionally biased toward basic and acidic residues.

This sequence belongs to the protein kinase superfamily. Tyr protein kinase family. Insulin receptor subfamily. In terms of assembly, interacts with plexA; component of a receptor complex that mediates the repulsive signaling in response to Semaphorin ligands.

The protein localises to the cell membrane. Functionally, acts as a calcium-dependent, homophilic cell adhesion molecule that regulates neural recognition during the development of the nervous system. Component of the repulsive Plexin signaling response to regulate motor axon guidance at the embryonic stage. Also component of a receptor complex that is required in the adult visual system to innervate the lamina layer; specific targeting of R1-R6 axons. This is Tyrosine-protein kinase-like otk from Drosophila yakuba (Fruit fly).